A 196-amino-acid chain; its full sequence is Nucleoside triphosphate pyrophosphatase (196 aa).

Asp73 functions as the Proton acceptor in the catalytic mechanism.

This sequence belongs to the Maf family. A divalent metal cation is required as a cofactor.

It is found in the cytoplasm. The enzyme catalyses a ribonucleoside 5'-triphosphate + H2O = a ribonucleoside 5'-phosphate + diphosphate + H(+). It carries out the reaction a 2'-deoxyribonucleoside 5'-triphosphate + H2O = a 2'-deoxyribonucleoside 5'-phosphate + diphosphate + H(+). Its function is as follows. Nucleoside triphosphate pyrophosphatase. May have a dual role in cell division arrest and in preventing the incorporation of modified nucleotides into cellular nucleic acids. This Anaplasma marginale (strain Florida) protein is Nucleoside triphosphate pyrophosphatase.